The primary structure comprises 396 residues: Cathepsin D (396 aa).

The N-terminal stretch at 1–18 is a signal peptide; it reads MKFLYLFLFAVFAWTSDA. Residues 19-61 constitute a propeptide, activation peptide; sequence IVRIPLKKFRSIRRTLSDSGLNVEQLLAGTNSLQHNQGFPSSN. Residues 76-393 form the Peptidase A1 domain; it reads YYGEIGLGTP…DRESNRVGFA (318 aa). Asp94 is an active-site residue. Cys107 and Cys114 are oxidised to a cystine. Asn131 carries an N-linked (GlcNAc...) asparagine glycan. A disulfide bond links Cys272 and Cys276. Asp281 is an active-site residue. An intrachain disulfide couples Cys315 to Cys352.

This sequence belongs to the peptidase A1 family. Monomer.

The protein resides in the lysosome. It carries out the reaction Specificity similar to, but narrower than, that of pepsin A. Does not cleave the 4-Gln-|-His-5 bond in B chain of insulin.. Its activity is regulated as follows. Inhibited by pepstatin. Its function is as follows. Acid protease active in intracellular protein breakdown. The polypeptide is Cathepsin D (ctsd) (Clupea harengus (Atlantic herring)).